The following is a 585-amino-acid chain: Arginine--tRNA ligase (585 aa).

The short motif at 127-137 is the 'HIGH' region element; that stretch reads PNTNKPLHVGH.

The protein belongs to the class-I aminoacyl-tRNA synthetase family. In terms of assembly, monomer.

It localises to the cytoplasm. It carries out the reaction tRNA(Arg) + L-arginine + ATP = L-arginyl-tRNA(Arg) + AMP + diphosphate. The polypeptide is Arginine--tRNA ligase (Borrelia garinii subsp. bavariensis (strain ATCC BAA-2496 / DSM 23469 / PBi) (Borreliella bavariensis)).